Reading from the N-terminus, the 362-residue chain is Probable prephenate dehydrogenase NovF (362 aa).

Positions 2–283 (RTAVIIGTGM…GIDGSNRVPG (282 aa)) constitute a Prephenate/arogenate dehydrogenase domain.

Belongs to the prephenate/arogenate dehydrogenase family.

The enzyme catalyses prephenate + NAD(+) = 3-(4-hydroxyphenyl)pyruvate + CO2 + NADH. Its pathway is antibiotic biosynthesis; novobiocin biosynthesis. Probable prephenate dehydrogenase that produces 4-hydroxyphenylpyruvate (4HPP) in the novobiocin biosynthesis pathway. Novobiocin is an aminocoumarin family antibiotic that targets bacterial DNA gyrases. The protein is Probable prephenate dehydrogenase NovF (novF) of Streptomyces niveus (Streptomyces spheroides).